Consider the following 207-residue polypeptide: RNA chaperone ProQ (207 aa).

Positions 100–156 (TLAESKAKVQARRKEQAQKARDEEKSKPKTKKAPQQRRANKPQAQKPAKQPVETRAL) are disordered. Residues 111-126 (RRKEQAQKARDEEKSK) are compositionally biased toward basic and acidic residues. Residues 127–139 (PKTKKAPQQRRAN) are compositionally biased toward basic residues.

This sequence belongs to the ProQ family.

Its subcellular location is the cytoplasm. RNA chaperone with significant RNA binding, RNA strand exchange and RNA duplexing activities. This is RNA chaperone ProQ from Vibrio vulnificus (strain CMCP6).